The chain runs to 437 residues: Elongation factor 1-gamma (437 aa).

Alanine 2 is subject to N-acetylalanine. The GST N-terminal domain occupies 2 to 87; the sequence is AAGTLYTYPE…YVSNEELRGS (86 aa). The GST C-terminal domain maps to 88 to 216; that stretch reads TPEAAAQVVQ…VKLCEKMAQF (129 aa). N6-acetyllysine occurs at positions 147 and 212. Residues 221 to 254 are compositionally biased toward basic and acidic residues; it reads FAESQPKKDTPRKEKGSREEKQKPQAERKEEKKA. Residues 221–268 form a disordered region; it reads FAESQPKKDTPRKEKGSREEKQKPQAERKEEKKAAAPAPEEEMDECEQ. Residue lysine 253 forms a Glycyl lysine isopeptide (Lys-Gly) (interchain with G-Cter in SUMO1) linkage. Residues 276–437 enclose the EF-1-gamma C-terminal domain; sequence AKDPFAHLPK…KAFNQGKIFK (162 aa). A Glycyl lysine isopeptide (Lys-Gly) (interchain with G-Cter in SUMO2) cross-link involves residue lysine 285. Residue lysine 401 is modified to N6-acetyllysine. N6-acetyllysine; alternate is present on lysine 434. N6-malonyllysine; alternate is present on lysine 434.

In terms of assembly, EF-1 is composed of four subunits: alpha, beta, delta, and gamma.

Functionally, probably plays a role in anchoring the complex to other cellular components. The polypeptide is Elongation factor 1-gamma (EEF1G) (Equus caballus (Horse)).